The sequence spans 308 residues: MPQDKLRIATRRSPLAMWQAEHVAAELRRHHPGLEVELVPMVTRGDRILDQALSRIGGKGLFIKELEQGMEEGRADLAVHSMKDVPWRMPDGFALPVILERHEPTDAFVSNHYRRLDDLPEGGHLGTASLRRQCQAKARRPDLRVSTLRGNVNTRLAKLDAGEFDAIILAASGLSRLGFDERIARRLPPEESLPAVGQGALGIECLAEDRRVQELVAPLDHGPTHTLLKAERAMNARLQGSCQVPIAGYACYQGEEIWLRGLVGSPDGQEIVRGEVRGPIAQAAELGDRLGGELLERGAARILADLAD.

Cys242 carries the post-translational modification S-(dipyrrolylmethanemethyl)cysteine.

The protein belongs to the HMBS family. Monomer. It depends on dipyrromethane as a cofactor.

The catalysed reaction is 4 porphobilinogen + H2O = hydroxymethylbilane + 4 NH4(+). It functions in the pathway porphyrin-containing compound metabolism; protoporphyrin-IX biosynthesis; coproporphyrinogen-III from 5-aminolevulinate: step 2/4. In terms of biological role, tetrapolymerization of the monopyrrole PBG into the hydroxymethylbilane pre-uroporphyrinogen in several discrete steps. This Alkalilimnicola ehrlichii (strain ATCC BAA-1101 / DSM 17681 / MLHE-1) protein is Porphobilinogen deaminase.